We begin with the raw amino-acid sequence, 208 residues long: MLKLAIPKGRLEEKVMTYLKKTGFTFERESSILREGKDIVCFMVRPFDVPTYLVHGVADIGFCGTDVLLEKETSLIQPFFIPTNISRMVLAGPKGKGIPEGEKRIATKFPNVTQRYCETRGWHCRIIPLKGSVELAPIAGLADLIVDITETGRTLKENNLEILDEIFVIRTHVVVNPVSYRTKREEVVSFLEKLQEVIEHDFDEQPRR.

The protein belongs to the ATP phosphoribosyltransferase family. Short subfamily. As to quaternary structure, heteromultimer composed of HisG and HisZ subunits.

It localises to the cytoplasm. It catalyses the reaction 1-(5-phospho-beta-D-ribosyl)-ATP + diphosphate = 5-phospho-alpha-D-ribose 1-diphosphate + ATP. Its pathway is amino-acid biosynthesis; L-histidine biosynthesis; L-histidine from 5-phospho-alpha-D-ribose 1-diphosphate: step 1/9. Its function is as follows. Catalyzes the condensation of ATP and 5-phosphoribose 1-diphosphate to form N'-(5'-phosphoribosyl)-ATP (PR-ATP). Has a crucial role in the pathway because the rate of histidine biosynthesis seems to be controlled primarily by regulation of HisG enzymatic activity. The protein is ATP phosphoribosyltransferase of Thermotoga petrophila (strain ATCC BAA-488 / DSM 13995 / JCM 10881 / RKU-1).